A 95-amino-acid chain; its full sequence is Citrate lyase acyl carrier protein (95 aa).

Serine 14 carries the O-(phosphoribosyl dephospho-coenzyme A)serine modification.

Belongs to the CitD family. In terms of assembly, oligomer with a subunit composition of (alpha,beta,gamma)6.

The protein resides in the cytoplasm. Functionally, covalent carrier of the coenzyme of citrate lyase. This is Citrate lyase acyl carrier protein from Haemophilus influenzae (strain PittGG).